The following is a 145-amino-acid chain: Mitochondrial import receptor subunit TOM20 homolog (145 aa).

At M1–S6 the chain is on the mitochondrial intermembrane side. A helical membrane pass occupies residues A7–F24. At D25 to E145 the chain is on the cytoplasmic side. Glycyl lysine isopeptide (Lys-Gly) (interchain with G-Cter in ubiquitin) cross-links involve residues K35, K56, K61, and K68. Phosphoserine is present on residues S135 and S138.

It belongs to the Tom20 family. Forms part of the preprotein translocase complex of the outer mitochondrial membrane (TOM complex) which consists of at least 7 different proteins (TOMM5, TOMM6, TOMM7, TOMM20, TOMM22, TOMM40 and TOMM70). Interacts with TOM22. Interacts with APEX1. Interacts with TBC1D21. Upon mitochondrial depolarization, interacts with PINK1; the interaction is required for PINK1-TOM-TIM23 supercomplex formation which is critical for PINK1 stabilization at the outer mitochondrial membrane, kinase activation and downstream mitophagy. Post-translationally, ubiquitinated by PRKN during mitophagy, leading to its degradation and enhancement of mitophagy. Deubiquitinated by USP30. In terms of tissue distribution, expressed in brain, kidney, stomach, colon, jejunum, ileum, testis, ovary and oviduct (at protein level). In the brain, expressed in neural cells of the cerebrum and cerebellum (at protein level). In the kidney, expressed in the proximal to distal tubule in the cortex and the outer and inner zones of the medulla (at protein level). In the stomach, expressed in the basal layer of stratified squamous epithelia in the forestomach and in the gastric pit and fundic gland of the glandular stomach (at protein level). Expressed in epithelial cells of the jejunum, ileum, and colon (at protein level). In the testis, expressed by spermatocytes and spermatogonia (at protein level). In the ovaries, expressed by follicular epithelial cells and corpus luteum cells (at protein level). In the oviduct, expressed in the epithelia of the isthmus and the ciliated cells of the ampulla (at protein level). Expressed in the sperm midpiece (at protein level).

The protein localises to the mitochondrion outer membrane. In terms of biological role, central component of the receptor complex responsible for the recognition and translocation of cytosolically synthesized mitochondrial preproteins. Together with TOM22 functions as the transit peptide receptor at the surface of the mitochondrion outer membrane and facilitates the movement of preproteins into the TOM40 translocation pore. Required for the translocation across the mitochondrial outer membrane of cytochrome P450 monooxygenases. This is Mitochondrial import receptor subunit TOM20 homolog (Tomm20) from Mus musculus (Mouse).